A 656-amino-acid chain; its full sequence is DNA ligase (656 aa).

NAD(+)-binding positions include 32-36, 81-82, and Glu112; these read DEEYD and SM. The active-site N6-AMP-lysine intermediate is the Lys114. Residues Arg135, Glu169, Lys284, and Lys308 each coordinate NAD(+). Zn(2+) contacts are provided by Cys402, Cys405, Cys418, and Cys423. The region spanning 577-656 is the BRCT domain; the sequence is VQKTPFTGKT…DMWKMLKEGK (80 aa).

It belongs to the NAD-dependent DNA ligase family. LigA subfamily. It depends on Mg(2+) as a cofactor. Mn(2+) is required as a cofactor.

It catalyses the reaction NAD(+) + (deoxyribonucleotide)n-3'-hydroxyl + 5'-phospho-(deoxyribonucleotide)m = (deoxyribonucleotide)n+m + AMP + beta-nicotinamide D-nucleotide.. DNA ligase that catalyzes the formation of phosphodiester linkages between 5'-phosphoryl and 3'-hydroxyl groups in double-stranded DNA using NAD as a coenzyme and as the energy source for the reaction. It is essential for DNA replication and repair of damaged DNA. This chain is DNA ligase, found in Nautilia profundicola (strain ATCC BAA-1463 / DSM 18972 / AmH).